Here is a 232-residue protein sequence, read N- to C-terminus: Phosphoadenosine 5'-phosphosulfate reductase (232 aa).

The active-site Nucleophile; cysteine thiosulfonate intermediate is the Cys-228.

It belongs to the PAPS reductase family. CysH subfamily.

The protein localises to the cytoplasm. It carries out the reaction [thioredoxin]-disulfide + sulfite + adenosine 3',5'-bisphosphate + 2 H(+) = [thioredoxin]-dithiol + 3'-phosphoadenylyl sulfate. Its pathway is sulfur metabolism; hydrogen sulfide biosynthesis; sulfite from sulfate: step 3/3. In terms of biological role, catalyzes the formation of sulfite from phosphoadenosine 5'-phosphosulfate (PAPS) using thioredoxin as an electron donor. This Synechococcus sp. (strain ATCC 27144 / PCC 6301 / SAUG 1402/1) (Anacystis nidulans) protein is Phosphoadenosine 5'-phosphosulfate reductase.